A 569-amino-acid chain; its full sequence is Protein germ cell-less (569 aa).

Residues 17–43 (SNRRKRKRSTDSSLGKDDPAQLDTTQP) form a disordered region. The region spanning 66-136 (SDVAVMALDK…MYSDEIEIES (71 aa)) is the BTB domain. The interval 517-553 (GANSDRPLSPSSADDSAVFIGDSEPSTPSSPAPRPRI) is disordered.

The protein resides in the cytoplasm. Required for the specification of pole cells and germ cell formation. Mothers with reduced glc function give rise to sterile adult progeny that lack germ cells. The sequence is that of Protein germ cell-less (gcl) from Drosophila melanogaster (Fruit fly).